We begin with the raw amino-acid sequence, 448 residues long: Alpha-2B adrenergic receptor (448 aa).

The Extracellular segment spans residues M1–T12. A helical transmembrane segment spans residues A13 to L38. At T39–L49 the chain is on the cytoplasmic side. Residues F50–L75 traverse the membrane as a helical segment. At G76–C85 the chain is on the extracellular side. Cysteines 85 and 163 form a disulfide. The helical transmembrane segment at E86 to L108 threads the bilayer. Residues D109–K130 are Cytoplasmic-facing. A helical transmembrane segment spans residues C131 to D153. The Extracellular portion of the chain corresponds to Q154–E168. A helical membrane pass occupies residues A169–L192. Residues R193–V370 lie on the Cytoplasmic side of the membrane. Positions R203–Q326 are disordered. Positions A293 to E309 are enriched in acidic residues. A helical membrane pass occupies residues L371–I394. Residues C395 to H403 are Extracellular-facing. Residues G404–F427 form a helical membrane-spanning segment. Residues N428 to W448 are Cytoplasmic-facing. Residue C440 is the site of S-palmitoyl cysteine attachment.

Belongs to the G-protein coupled receptor 1 family. Adrenergic receptor subfamily. ADRA2B sub-subfamily. Interacts with RAB26. Interacts with PPP1R9B.

Its subcellular location is the cell membrane. Its function is as follows. Alpha-2 adrenergic receptors mediate the catecholamine-induced inhibition of adenylate cyclase through the action of G proteins. The polypeptide is Alpha-2B adrenergic receptor (ADRA2B) (Cavia porcellus (Guinea pig)).